The primary structure comprises 537 residues: NEDD4-binding protein 3 (537 aa).

Phosphoserine is present on Ser-172. Disordered regions lie at residues 173–234, 328–361, and 423–458; these read LDEG…VLSC, KELR…EARW, and QEQA…REGA. Positions 178-207 are enriched in low complexity; the sequence is PEPSLSDSSSGGSFGRSPGTGPSPFSSSLG. Positions 295-501 form a coiled coil; the sequence is VERLHEVAQK…RVLRYQREIQ (207 aa). Residues 351-361 are compositionally biased toward basic and acidic residues; that stretch reads PNARPEEEARW.

Belongs to the N4BP3 family. Binds NEDD4. Interacts with 14-3-3 proteins. Interacts with MAVS.

Its subcellular location is the cytoplasmic vesicle. It localises to the cell projection. It is found in the axon. The protein localises to the dendrite. Plays a positive role in the antiviral innate immune signaling pathway. Mechanistically, interacts with MAVS and functions as a positive regulator to promote 'Lys-63'-linked polyubiquitination of MAVS and thus strengthens the interaction between MAVS and TRAF2. Also plays a role in axon and dendrite arborization during cranial nerve development. May also be important for neural crest migration and early development of other anterior structures including eye, brain and cranial cartilage. The protein is NEDD4-binding protein 3 (N4bp3) of Mus musculus (Mouse).